Consider the following 273-residue polypeptide: Thioredoxin-like 1-3, chloroplastic (273 aa).

The N-terminal 44 residues, 1–44, are a transit peptide targeting the chloroplast; sequence MATDSFIKLNPISFNRARFDLRDFAGISPKSISSLCCISPRLIS. A Thioredoxin domain is found at 62-202; sequence LFSKKKIPAF…FKEALEKHGR (141 aa). Residues C125 and C128 each act as nucleophile in the active site. A disulfide bridge links C125 with C128.

The protein belongs to the thioredoxin family.

Its subcellular location is the plastid. It is found in the chloroplast. In terms of biological role, probable thiol-disulfide oxidoreductase that may participate in various redox reactions. The sequence is that of Thioredoxin-like 1-3, chloroplastic from Arabidopsis thaliana (Mouse-ear cress).